The chain runs to 181 residues: Kappa-casein (181 aa).

The N-terminal stretch at 1-21 (MMRNFIVVVNILALTLPFLAA) is a signal peptide. At Thr123 the chain carries Phosphothreonine. 3 O-linked (GalNAc...) threonine glycosylation sites follow: Thr134, Thr144, and Thr155. Position 162 is a phosphoserine; alternate (Ser162). The O-linked (GalNAc...) serine; alternate glycan is linked to Ser162. Ser178 bears the Phosphoserine mark.

The protein belongs to the kappa-casein family. As to expression, mammary gland specific. Secreted in milk.

The protein resides in the secreted. Its function is as follows. Kappa-casein stabilizes micelle formation, preventing casein precipitation in milk. The sequence is that of Kappa-casein (Csn3) from Mus musculus (Mouse).